The primary structure comprises 294 residues: Phosphoribosylaminoimidazole-succinocarboxamide synthase (294 aa).

It belongs to the SAICAR synthetase family.

The catalysed reaction is 5-amino-1-(5-phospho-D-ribosyl)imidazole-4-carboxylate + L-aspartate + ATP = (2S)-2-[5-amino-1-(5-phospho-beta-D-ribosyl)imidazole-4-carboxamido]succinate + ADP + phosphate + 2 H(+). The protein operates within purine metabolism; IMP biosynthesis via de novo pathway; 5-amino-1-(5-phospho-D-ribosyl)imidazole-4-carboxamide from 5-amino-1-(5-phospho-D-ribosyl)imidazole-4-carboxylate: step 1/2. This is Phosphoribosylaminoimidazole-succinocarboxamide synthase from Rhodococcus jostii (strain RHA1).